The following is a 389-amino-acid chain: Naringenin-chalcone synthase (389 aa).

The active site involves Cys164.

This sequence belongs to the thiolase-like superfamily. Chalcone/stilbene synthases family. In terms of tissue distribution, expressed in glandular trichomes. Detected at low levels in female flowers, stems, seeds, leaves and roots.

The protein localises to the cytoplasm. It carries out the reaction (E)-4-coumaroyl-CoA + 3 malonyl-CoA + 3 H(+) = 2',4,4',6'-tetrahydroxychalcone + 3 CO2 + 4 CoA. In terms of biological role, chalcone synthase that can also use isovaleryl-CoA, isobutyryl-CoA or hexanoyl-CoA as substrates, but that is unable to produce olivetol or olivetolic acid. This chain is Naringenin-chalcone synthase (CHS), found in Cannabis sativa (Hemp).